The following is a 36-amino-acid chain: Photosystem II reaction center protein M (36 aa).

A helical transmembrane segment spans residues 5–25 (ILGVIAVALFILIPTSFLLIL).

This sequence belongs to the PsbM family. PSII is composed of 1 copy each of membrane proteins PsbA, PsbB, PsbC, PsbD, PsbE, PsbF, PsbH, PsbI, PsbJ, PsbK, PsbL, PsbM, PsbT, PsbY, PsbZ, Psb30/Ycf12, at least 3 peripheral proteins of the oxygen-evolving complex and a large number of cofactors. It forms dimeric complexes.

Its subcellular location is the plastid. The protein localises to the chloroplast thylakoid membrane. Its function is as follows. One of the components of the core complex of photosystem II (PSII). PSII is a light-driven water:plastoquinone oxidoreductase that uses light energy to abstract electrons from H(2)O, generating O(2) and a proton gradient subsequently used for ATP formation. It consists of a core antenna complex that captures photons, and an electron transfer chain that converts photonic excitation into a charge separation. This subunit is found at the monomer-monomer interface. This Bigelowiella natans (Pedinomonas minutissima) protein is Photosystem II reaction center protein M.